The primary structure comprises 135 residues: Sex-regulated protein janus-A (135 aa).

K37 contributes to the substrate binding site. H63 acts as the Proton acceptor in catalysis. 104 to 106 (SQG) contacts substrate.

Belongs to the janus family.

JanA and janB regulate somatic sex differentiation. The protein is Sex-regulated protein janus-A (janA) of Drosophila yakuba (Fruit fly).